Here is a 196-residue protein sequence, read N- to C-terminus: GTP cyclohydrolase-2 (196 aa).

A GTP-binding site is contributed by 49-53 (RVHSE). Cysteine 54, cysteine 65, and cysteine 67 together coordinate Zn(2+). GTP is bound by residues glutamine 70, 92-94 (EGR), and threonine 114. The Proton acceptor role is filled by aspartate 126. Catalysis depends on arginine 128, which acts as the Nucleophile. GTP-binding residues include threonine 149 and lysine 154.

Belongs to the GTP cyclohydrolase II family. In terms of assembly, homodimer. It depends on Zn(2+) as a cofactor.

The enzyme catalyses GTP + 4 H2O = 2,5-diamino-6-hydroxy-4-(5-phosphoribosylamino)-pyrimidine + formate + 2 phosphate + 3 H(+). It functions in the pathway cofactor biosynthesis; riboflavin biosynthesis; 5-amino-6-(D-ribitylamino)uracil from GTP: step 1/4. Its function is as follows. Catalyzes the conversion of GTP to 2,5-diamino-6-ribosylamino-4(3H)-pyrimidinone 5'-phosphate (DARP), formate and pyrophosphate. The sequence is that of GTP cyclohydrolase-2 from Enterobacter sp. (strain 638).